Reading from the N-terminus, the 368-residue chain is tRNA-specific 2-thiouridylase MnmA (368 aa).

ATP is bound by residues 11 to 18 and Met37; that span reads GMSGGVDS. Residues 97–99 form an interaction with target base in tRNA region; sequence NPD. The Nucleophile role is filled by Cys102. The cysteines at positions 102 and 199 are disulfide-linked. Gly127 is a binding site for ATP. Residues 149-151 are interaction with tRNA; sequence KDQ. Catalysis depends on Cys199, which acts as the Cysteine persulfide intermediate. The segment at 311–312 is interaction with tRNA; that stretch reads RY.

Belongs to the MnmA/TRMU family. As to quaternary structure, interacts with TusE.

It localises to the cytoplasm. It carries out the reaction S-sulfanyl-L-cysteinyl-[protein] + uridine(34) in tRNA + AH2 + ATP = 2-thiouridine(34) in tRNA + L-cysteinyl-[protein] + A + AMP + diphosphate + H(+). Functionally, catalyzes the 2-thiolation of uridine at the wobble position (U34) of tRNA(Lys), tRNA(Glu) and tRNA(Gln), leading to the formation of s(2)U34, the first step of tRNA-mnm(5)s(2)U34 synthesis. Sulfur is provided by IscS, via a sulfur-relay system. Binds ATP and its substrate tRNAs. In Shigella boydii serotype 4 (strain Sb227), this protein is tRNA-specific 2-thiouridylase MnmA.